The primary structure comprises 304 residues: ADP-ribosyl cyclase/cyclic ADP-ribose hydrolase 1 (304 aa).

Residues Met-1–Lys-21 are Cytoplasmic-facing. A helical; Signal-anchor for type II membrane protein membrane pass occupies residues Ala-22–Leu-44. Topologically, residues Leu-45–Thr-304 are extracellular. 3 disulfides stabilise this stretch: Cys-70-Cys-86, Cys-103-Cys-184, and Cys-164-Cys-177. N-linked (GlcNAc...) asparagine glycosylation is present at Asn-104. Cys-123 is a catalytic residue. Asn-124 carries an N-linked (GlcNAc...) asparagine glycan. The active site involves Cys-205. N-linked (GlcNAc...) asparagine glycans are attached at residues Asn-213 and Asn-223. Disulfide bonds link Cys-258-Cys-279 and Cys-291-Cys-300.

The protein belongs to the ADP-ribosyl cyclase family. As to quaternary structure, homodimer.

It localises to the membrane. It catalyses the reaction NAD(+) = cyclic ADP-beta-D-ribose + nicotinamide + H(+). The catalysed reaction is nicotinate + NADP(+) = nicotinate-adenine dinucleotide phosphate + nicotinamide. The enzyme catalyses NAD(+) + H2O = ADP-D-ribose + nicotinamide + H(+). Functionally, synthesizes the second messengers cyclic ADP-ribose (cADPR) and nicotinate-adenine dinucleotide phosphate (NAADP), the former a second messenger for glucose-induced insulin secretion, the latter a Ca(2+) mobilizer. Also has cADPR hydrolase activity. The polypeptide is ADP-ribosyl cyclase/cyclic ADP-ribose hydrolase 1 (Cd38) (Mus musculus (Mouse)).